A 261-amino-acid polypeptide reads, in one-letter code: Thiazole synthase (261 aa).

Lys101 (schiff-base intermediate with DXP) is an active-site residue. 1-deoxy-D-xylulose 5-phosphate is bound by residues Gly162, 188-189 (AG), and 210-211 (NT).

The protein belongs to the ThiG family. In terms of assembly, homotetramer. Forms heterodimers with either ThiH or ThiS.

It is found in the cytoplasm. It catalyses the reaction [ThiS sulfur-carrier protein]-C-terminal-Gly-aminoethanethioate + 2-iminoacetate + 1-deoxy-D-xylulose 5-phosphate = [ThiS sulfur-carrier protein]-C-terminal Gly-Gly + 2-[(2R,5Z)-2-carboxy-4-methylthiazol-5(2H)-ylidene]ethyl phosphate + 2 H2O + H(+). It functions in the pathway cofactor biosynthesis; thiamine diphosphate biosynthesis. Functionally, catalyzes the rearrangement of 1-deoxy-D-xylulose 5-phosphate (DXP) to produce the thiazole phosphate moiety of thiamine. Sulfur is provided by the thiocarboxylate moiety of the carrier protein ThiS. In vitro, sulfur can be provided by H(2)S. The chain is Thiazole synthase from Azoarcus sp. (strain BH72).